We begin with the raw amino-acid sequence, 317 residues long: Acetyl-coenzyme A carboxylase carboxyl transferase subunit alpha (317 aa).

One can recognise a CoA carboxyltransferase C-terminal domain in the interval 33 to 294 (NLDDEIARLQ…KQRLLEDLAD (262 aa)).

The protein belongs to the AccA family. Acetyl-CoA carboxylase is a heterohexamer composed of biotin carboxyl carrier protein (AccB), biotin carboxylase (AccC) and two subunits each of ACCase subunit alpha (AccA) and ACCase subunit beta (AccD).

Its subcellular location is the cytoplasm. It carries out the reaction N(6)-carboxybiotinyl-L-lysyl-[protein] + acetyl-CoA = N(6)-biotinyl-L-lysyl-[protein] + malonyl-CoA. Its pathway is lipid metabolism; malonyl-CoA biosynthesis; malonyl-CoA from acetyl-CoA: step 1/1. In terms of biological role, component of the acetyl coenzyme A carboxylase (ACC) complex. First, biotin carboxylase catalyzes the carboxylation of biotin on its carrier protein (BCCP) and then the CO(2) group is transferred by the carboxyltransferase to acetyl-CoA to form malonyl-CoA. This chain is Acetyl-coenzyme A carboxylase carboxyl transferase subunit alpha, found in Glaesserella parasuis serovar 5 (strain SH0165) (Haemophilus parasuis).